Reading from the N-terminus, the 304-residue chain is Sulfate adenylyltransferase subunit 2 (304 aa).

The protein belongs to the PAPS reductase family. CysD subfamily. In terms of assembly, heterodimer composed of CysD, the smaller subunit, and CysNC.

The enzyme catalyses sulfate + ATP + H(+) = adenosine 5'-phosphosulfate + diphosphate. The protein operates within sulfur metabolism; hydrogen sulfide biosynthesis; sulfite from sulfate: step 1/3. With CysN forms the ATP sulfurylase (ATPS) that catalyzes the adenylation of sulfate producing adenosine 5'-phosphosulfate (APS) and diphosphate, the first enzymatic step in sulfur assimilation pathway. APS synthesis involves the formation of a high-energy phosphoric-sulfuric acid anhydride bond driven by GTP hydrolysis by CysN coupled to ATP hydrolysis by CysD. The polypeptide is Sulfate adenylyltransferase subunit 2 (Xylella fastidiosa (strain 9a5c)).